The chain runs to 348 residues: UDP-3-O-acylglucosamine N-acyltransferase (348 aa).

The Proton acceptor role is filled by histidine 257.

This sequence belongs to the transferase hexapeptide repeat family. LpxD subfamily. As to quaternary structure, homotrimer.

The catalysed reaction is a UDP-3-O-[(3R)-3-hydroxyacyl]-alpha-D-glucosamine + a (3R)-hydroxyacyl-[ACP] = a UDP-2-N,3-O-bis[(3R)-3-hydroxyacyl]-alpha-D-glucosamine + holo-[ACP] + H(+). It functions in the pathway bacterial outer membrane biogenesis; LPS lipid A biosynthesis. Its function is as follows. Catalyzes the N-acylation of UDP-3-O-acylglucosamine using 3-hydroxyacyl-ACP as the acyl donor. Is involved in the biosynthesis of lipid A, a phosphorylated glycolipid that anchors the lipopolysaccharide to the outer membrane of the cell. The sequence is that of UDP-3-O-acylglucosamine N-acyltransferase from Bartonella quintana (strain Toulouse) (Rochalimaea quintana).